The primary structure comprises 219 residues: Probable GTP-binding protein EngB (219 aa).

The EngB-type G domain occupies 24-207; it reads VQPEIAFAGR…HALIESWVRP (184 aa). Residues 32 to 39, 59 to 63, 81 to 84, 148 to 151, and 186 to 188 contribute to the GTP site; these read GRSNAGKS, GRTQH, DLPG, TKCD, and FSA. Mg(2+) contacts are provided by Ser-39 and Thr-61.

Belongs to the TRAFAC class TrmE-Era-EngA-EngB-Septin-like GTPase superfamily. EngB GTPase family. It depends on Mg(2+) as a cofactor.

Its function is as follows. Necessary for normal cell division and for the maintenance of normal septation. The sequence is that of Probable GTP-binding protein EngB from Burkholderia multivorans (strain ATCC 17616 / 249).